The primary structure comprises 70 residues: Protein SlyX homolog (70 aa).

Belongs to the SlyX family.

This chain is Protein SlyX homolog, found in Shewanella oneidensis (strain ATCC 700550 / JCM 31522 / CIP 106686 / LMG 19005 / NCIMB 14063 / MR-1).